The sequence spans 424 residues: Neurotensin receptor type 1 (424 aa).

Residues 1 to 67 (MHLNSSVQQG…TDIYSKVLVT (67 aa)) are Extracellular-facing. Residues N4, N38, and N42 are each glycosylated (N-linked (GlcNAc...) asparagine). Residues 68-88 (AVYLALFVVGTVGNSVTAFTL) form a helical membrane-spanning segment. The Cytoplasmic segment spans residues 89–102 (ARKKSLQSLQSTVH). The chain crosses the membrane as a helical span at residues 103-122 (YHLGSLALSDLLILLLAMPV). At 123–142 (ELYNFIWVHHPWAFGDAGCR) the chain is on the extracellular side. A disulfide bond links C141 and C224. Residues 143 to 164 (GYYFLRDACTYATALNVASLSV) form a helical membrane-spanning segment. Residues 165 to 184 (ERYLAICHPFKAKTLMSRSR) lie on the Cytoplasmic side of the membrane. Residues 185 to 205 (TKKFISAIWLASALLAVPMLF) traverse the membrane as a helical segment. The Extracellular segment spans residues 206-234 (TMGLQNRSADGQHPGGLVCTPTVDTATVK). The N-linked (GlcNAc...) asparagine glycan is linked to N211. A helical transmembrane segment spans residues 235 to 259 (VVIQVNTFMSFLFPMLIISILNTVI). The Cytoplasmic segment spans residues 260–308 (ANKLTVMVHQAAEQGRGVCTVGTHNSLEHSTFNMSIEPGRVQALRHGVL). A helical membrane pass occupies residues 309–330 (VLRAVVIAFVVCWLPYHVRRLM). A neurotensin binding region spans residues 326-349 (VRRLMFCYISDEQWTTFLFDFYHY). At 331–348 (FCYISDEQWTTFLFDFYH) the chain is on the extracellular side. Residues 349-369 (YFYMLTNALFYVSSAINPILY) traverse the membrane as a helical segment. Residues 370-424 (NLVSANFRQVFLSTLACLCPGWRRRRKKRPTFSRKPNSMSSNHAFSTSATRETLY) are Cytoplasmic-facing. Residues C386 and C388 are each lipidated (S-palmitoyl cysteine). The disordered stretch occupies residues 398–424 (RPTFSRKPNSMSSNHAFSTSATRETLY). The segment covering 403–424 (RKPNSMSSNHAFSTSATRETLY) has biased composition (polar residues).

The protein belongs to the G-protein coupled receptor 1 family. Neurotensin receptor subfamily. NTSR1 sub-subfamily. Interacts (palmitoylated form) with GNA11. N-glycosylated. In terms of processing, palmitoylated; this is required for normal localization at membrane rafts and normal GNA11-mediated activation of down-stream signaling cascades. The palmitoylation level increases in response to neurotensin treatment.

It is found in the cell membrane. The protein localises to the membrane raft. Functionally, G-protein coupled receptor for the tridecapeptide neurotensin (NTS). Signaling is effected via G proteins that activate a phosphatidylinositol-calcium second messenger system. Signaling leads to the activation of downstream MAP kinases and protects cells against apoptosis. In Mus musculus (Mouse), this protein is Neurotensin receptor type 1 (Ntsr1).